The following is a 121-amino-acid chain: uncharacterized protein (121 aa).

Position 77–84 (77–84) interacts with ATP; the sequence is AALSFGKT.

This is an uncharacterized protein from Saccharomyces cerevisiae (strain ATCC 204508 / S288c) (Baker's yeast).